Here is a 70-residue protein sequence, read N- to C-terminus: EASSSSDDNVCCNGCLCDRRAPPYFECVCVDTFDHCPASCNSCVCTRSNPPQCRCTDKTQGRCPVTECRS.

7 disulfide bridges follow: Cys-11–Cys-68, Cys-12–Cys-29, Cys-15–Cys-63, Cys-17–Cys-27, Cys-36–Cys-43, Cys-40–Cys-55, and Cys-45–Cys-53.

The protein belongs to the Bowman-Birk serine protease inhibitor family.

These proteins inhibit trypsin and chymotrypsin, having 2 sites of interaction with trypsin. The site of interaction with chymotrypsin has not been determined but is not independent of the trypsin-reactive sites. The sequence is that of Bowman-Birk type proteinase inhibitor A-II from Arachis hypogaea (Peanut).